A 95-amino-acid polypeptide reads, in one-letter code: HIG1 domain family member 1A, mitochondrial (95 aa).

At Ser2 the chain carries N-acetylserine. The 92-residue stretch at 2-93 (STNTDLSLSS…YQEFWANPKP (92 aa)) folds into the HIG1 domain. Ser8 carries the post-translational modification Phosphoserine. 2 helical membrane passes run 28–48 (PFVPIGMAGFAAIVAYGLYKL) and 69–89 (GFVVGAMTLGMGYSMYQEFWA).

As to quaternary structure, associates with cytochrome c oxidase (COX, complex IV); proposed complex component. Also associates with respiratory chain supercomplexes.

It is found in the mitochondrion membrane. Its subcellular location is the mitochondrion inner membrane. In terms of biological role, proposed subunit of cytochrome c oxidase (COX, complex IV), which is the terminal component of the mitochondrial respiratory chain that catalyzes the reduction of oxygen to water. May play a role in the assembly of respiratory supercomplexes. The protein is HIG1 domain family member 1A, mitochondrial (Higd1a) of Mus musculus (Mouse).